Here is a 489-residue protein sequence, read N- to C-terminus: Protein MGF 505-2R (489 aa).

The protein belongs to the asfivirus MGF 505 family.

Functionally, plays a role in virus cell tropism, and may be required for efficient virus replication in macrophages. This Ornithodoros (relapsing fever ticks) protein is Protein MGF 505-2R.